The primary structure comprises 268 residues: Tryptophan synthase alpha chain (268 aa).

Residues E49 and D60 each act as proton acceptor in the active site.

It belongs to the TrpA family. In terms of assembly, tetramer of two alpha and two beta chains.

The catalysed reaction is (1S,2R)-1-C-(indol-3-yl)glycerol 3-phosphate + L-serine = D-glyceraldehyde 3-phosphate + L-tryptophan + H2O. It functions in the pathway amino-acid biosynthesis; L-tryptophan biosynthesis; L-tryptophan from chorismate: step 5/5. Functionally, the alpha subunit is responsible for the aldol cleavage of indoleglycerol phosphate to indole and glyceraldehyde 3-phosphate. This Shigella flexneri serotype 5b (strain 8401) protein is Tryptophan synthase alpha chain.